Here is a 264-residue protein sequence, read N- to C-terminus: Inner membrane ABC transporter permease protein YdcV (264 aa).

The Cytoplasmic portion of the chain corresponds to 1–12 (MHSERAPFFLKL). Residues 13–33 (AAWGGVVFLHFPILIIAAYAF) traverse the membrane as a helical segment. Residues 34–70 (NTEDAAFSFPPQGLTLRWFSVAAQRSDILDAVTLSLK) are Periplasmic-facing. An ABC transmembrane type-1 domain is found at 65–252 (VTLSLKVAAL…MLVTTLPILG (188 aa)). A helical membrane pass occupies residues 71–91 (VAALATLIALVLGTLAAAALW). The Cytoplasmic segment spans residues 92-100 (RRDFFGKNA). A helical membrane pass occupies residues 101-121 (ISLLLLLPIALPGIVTGLALL). Residues 122 to 128 (TAFKTIN) lie on the Periplasmic side of the membrane. The chain crosses the membrane as a helical span at residues 129 to 149 (LEPGFFTIVVGHATFCVVVVF). Residues 150-189 (NNVIARFRRTSWSLVEASMDLGANGWQTFRYVVLPNLSSA) lie on the Cytoplasmic side of the membrane. Residues 190–210 (LLAGGMLAFALSFDEIIVTTF) form a helical membrane-spanning segment. Topologically, residues 211 to 236 (TAGHERTLPLWLLNQLGRPRDVPVTN) are periplasmic. Residues 237 to 257 (VVALLVMLVTTLPILGAWWLT) traverse the membrane as a helical segment. Topologically, residues 258 to 264 (REGDNGQ) are cytoplasmic.

It belongs to the binding-protein-dependent transport system permease family. CysTW subfamily.

The protein resides in the cell inner membrane. Its function is as follows. Probably part of the ABC transporter complex YdcSTUV. Probably responsible for the translocation of the substrate across the membrane. The sequence is that of Inner membrane ABC transporter permease protein YdcV (ydcV) from Shigella flexneri.